The primary structure comprises 447 residues: MLILRQLMDAYIRQKRASPGMVQASDLQMNRPMSGMRSNSRELHAYDGPMQFIGSPQNPDQILSNNSSSITMNSSRNNSNNMRSLSTINQEDLIEEISSHELEDEESSPVTVVEQPIAPQSANSAHSQRARIGQPSFNDTLDEEDYANRNISGVAAVRPAGIGSPYKEGAAMEGSNGAANGSGSVGGSGESEGDVIGQIDQFVMQPAPQGVLYKCRITRDRKGMDRGLFPIYYLHLERDYGKKIFLLGGRKRKKSKTSNYIVSCDPTDLSRNADGFCGKLRSNVFGTSFTVFDSGNKESTDSPRLDLAVIIYDTNILGFKGPRNMTVILPGMTEDDQRVKISSADPKQQGILDLWKMKNMDNIVELHNKTPVWNDETQSYVLNFHGRVTQASVKNFQLVHDSDPEYIVMQFGRTSEDVFTMDYRYPLCAMQAFAIALSSFDGKIACE.

Residues 54–84 (GSPQNPDQILSNNSSSITMNSSRNNSNNMRS) form a disordered region. Positions 62 to 84 (ILSNNSSSITMNSSRNNSNNMRS) are enriched in low complexity. Serine 136 is modified (phosphoserine). Residues 168-182 (EGAAMEGSNGAANGS) are compositionally biased toward low complexity. The tract at residues 168–191 (EGAAMEGSNGAANGSGSVGGSGES) is disordered.

It belongs to the TUB family.

The protein localises to the cytoplasm. It localises to the nucleus. Its subcellular location is the cell projection. The protein resides in the cilium membrane. It is found in the rhabdomere. The sequence is that of Protein king tubby from Drosophila grimshawi (Hawaiian fruit fly).